The sequence spans 308 residues: Cilia- and flagella-associated protein 73 (308 aa).

2 coiled-coil regions span residues 103 to 134 (RIQK…LEKN) and 164 to 227 (LSAT…QEAK).

This sequence belongs to the CFAP73 family. In terms of assembly, interacts with FAP100; form the modifier of inner arm (MIA) complex.

Its subcellular location is the cytoplasm. The protein localises to the cytoskeleton. The protein resides in the flagellum axoneme. Functionally, as part of MIA, a complex associated with the outer doublet microtubules of the axoneme, may play a role in ciliary/flagellar motility by regulating the assembly and the activity of inner dynein arm. The protein is Cilia- and flagella-associated protein 73 of Chlamydomonas reinhardtii (Chlamydomonas smithii).